Here is a 780-residue protein sequence, read N- to C-terminus: TSC22 domain family protein 2 (780 aa).

Disordered stretches follow at residues A20 to P86, T126 to C158, A235 to P499, L587 to S607, and L736 to A780. Positions E28–D37 are enriched in acidic residues. Positions T126 to P146 are enriched in low complexity. A compositionally biased stretch (polar residues) spans G241–T262. Low complexity-rich tracts occupy residues G297–G316, P344–Q361, and Q395–P412. Residues T415–S434 are compositionally biased toward polar residues. Low complexity predominate over residues Q453 to P468. Polar residues predominate over residues L736–S756. Residues P765–Q774 are compositionally biased toward pro residues.

Belongs to the TSC-22/Dip/Bun family. As to quaternary structure, interacts with NRBP1. Interacts with PKM isoform M2; the interaction results in reduced nuclear levels of PKM isoform M2, leading to repression of cyclin CCND1 transcription and reduced cell growth. Interacts with WDR77.

Functionally, reduces the level of nuclear PKM isoform M2 which results in repression of cyclin CCND1 transcription and reduced cell growth. This Homo sapiens (Human) protein is TSC22 domain family protein 2.